A 695-amino-acid chain; its full sequence is Rho-related BTB domain-containing protein 1 (695 aa).

The rho-like stretch occupies residues 1 to 210 (MDSDMDYERP…DNAIRAALIS (210 aa)). GTP-binding positions include 21–28 (GDNAVGKT), 84–88 (DTFGD), and 140–143 (CQLD). 2 consecutive BTB domains span residues 266–426 (ADVL…DEKE) and 484–551 (SDVT…SPNL). The tract at residues 325–351 (SLGSAEEGKEGPQRTPQADPGASSGQD) is disordered.

The protein belongs to the small GTPase superfamily. Rho family. As to expression, highest expression in heart and testis.

The protein is Rho-related BTB domain-containing protein 1 (Rhobtb1) of Mus musculus (Mouse).